The following is a 130-amino-acid chain: Transcription antitermination protein NusB (130 aa).

It belongs to the NusB family.

In terms of biological role, involved in transcription antitermination. Required for transcription of ribosomal RNA (rRNA) genes. Binds specifically to the boxA antiterminator sequence of the ribosomal RNA (rrn) operons. In Bacillus cereus (strain B4264), this protein is Transcription antitermination protein NusB.